The sequence spans 161 residues: Putative allophycocyanin subunit alpha 2 (161 aa).

Asparagine 71 bears the N4-methylasparagine mark. Position 81 (cysteine 81) interacts with (2R,3E)-phycocyanobilin.

Belongs to the phycobiliprotein family. As to quaternary structure, heterohexamer of two alpha chains, one alpha-B chain and three beta chains. In terms of processing, contains one covalently linked phycocyanobilin chromophore. The chromophore is added by phycocyanobilin lyase CpcS 1.

The protein resides in the cellular thylakoid membrane. Light-harvesting photosynthetic bile pigment-protein from the phycobiliprotein complex. Allophycocyanin has a maximum absorption at approximately 650 to 653 nanometers. The protein is Putative allophycocyanin subunit alpha 2 (apcA2) of Nostoc sp. (strain PCC 7120 / SAG 25.82 / UTEX 2576).